Consider the following 360-residue polypeptide: 3-dehydroquinate synthase (360 aa).

NAD(+)-binding positions include 70–75 (DGEKYK), 104–108 (GVIGD), 128–129 (TT), Lys141, and Lys150. Zn(2+)-binding residues include Glu183, His246, and His263.

This sequence belongs to the sugar phosphate cyclases superfamily. Dehydroquinate synthase family. Requires Co(2+) as cofactor. Zn(2+) is required as a cofactor. The cofactor is NAD(+).

It localises to the cytoplasm. It carries out the reaction 7-phospho-2-dehydro-3-deoxy-D-arabino-heptonate = 3-dehydroquinate + phosphate. Its pathway is metabolic intermediate biosynthesis; chorismate biosynthesis; chorismate from D-erythrose 4-phosphate and phosphoenolpyruvate: step 2/7. In terms of biological role, catalyzes the conversion of 3-deoxy-D-arabino-heptulosonate 7-phosphate (DAHP) to dehydroquinate (DHQ). The protein is 3-dehydroquinate synthase of Acinetobacter baumannii (strain AYE).